A 209-amino-acid chain; its full sequence is Uracil phosphoribosyltransferase (209 aa).

Residues R79, R104, and 131 to 139 (DPMLATGGS) contribute to the 5-phospho-alpha-D-ribose 1-diphosphate site. Residues I194 and 199 to 201 (GDA) contribute to the uracil site. A 5-phospho-alpha-D-ribose 1-diphosphate-binding site is contributed by D200.

Belongs to the UPRTase family. Mg(2+) serves as cofactor.

It catalyses the reaction UMP + diphosphate = 5-phospho-alpha-D-ribose 1-diphosphate + uracil. The protein operates within pyrimidine metabolism; UMP biosynthesis via salvage pathway; UMP from uracil: step 1/1. Allosterically activated by GTP. Functionally, catalyzes the conversion of uracil and 5-phospho-alpha-D-ribose 1-diphosphate (PRPP) to UMP and diphosphate. The sequence is that of Uracil phosphoribosyltransferase from Halalkalibacterium halodurans (strain ATCC BAA-125 / DSM 18197 / FERM 7344 / JCM 9153 / C-125) (Bacillus halodurans).